Reading from the N-terminus, the 355-residue chain is 3-dehydroquinate synthase (355 aa).

NAD(+)-binding positions include 71–76 (EGEASK), 105–109 (GVVGD), 129–130 (TS), K142, K151, and 169–172 (TLKT). Positions 184, 246, and 263 each coordinate Zn(2+).

It belongs to the sugar phosphate cyclases superfamily. Dehydroquinate synthase family. The cofactor is Co(2+). Requires Zn(2+) as cofactor. NAD(+) serves as cofactor.

It is found in the cytoplasm. The enzyme catalyses 7-phospho-2-dehydro-3-deoxy-D-arabino-heptonate = 3-dehydroquinate + phosphate. The protein operates within metabolic intermediate biosynthesis; chorismate biosynthesis; chorismate from D-erythrose 4-phosphate and phosphoenolpyruvate: step 2/7. In terms of biological role, catalyzes the conversion of 3-deoxy-D-arabino-heptulosonate 7-phosphate (DAHP) to dehydroquinate (DHQ). The sequence is that of 3-dehydroquinate synthase from Streptococcus suis (strain 98HAH33).